Reading from the N-terminus, the 229-residue chain is ATP synthase subunit a (229 aa).

Transmembrane regions (helical) follow at residues 25–45 (ADAIAYTWLIIALLLIVSILA), 82–102 (FFPLIATLALFILVSNLIGLI), 111–131 (NINTTAACAVIVFVTTHIVGI), 142–162 (FLGPILWLAPMMFFIEVIGHF), 181–201 (LVLMIFFGLAPFLVPLPMMLM), and 202–222 (GVLVSFIQAFVFMLLAMIYIQ).

Belongs to the ATPase A chain family. In terms of assembly, F-type ATPases have 2 components, CF(1) - the catalytic core - and CF(0) - the membrane proton channel. CF(1) has five subunits: alpha(3), beta(3), gamma(1), delta(1), epsilon(1). CF(0) has three main subunits: a(1), b(2) and c(9-12). The alpha and beta chains form an alternating ring which encloses part of the gamma chain. CF(1) is attached to CF(0) by a central stalk formed by the gamma and epsilon chains, while a peripheral stalk is formed by the delta and b chains.

It is found in the cell inner membrane. Key component of the proton channel; it plays a direct role in the translocation of protons across the membrane. This Geotalea daltonii (strain DSM 22248 / JCM 15807 / FRC-32) (Geobacter daltonii) protein is ATP synthase subunit a.